A 688-amino-acid polypeptide reads, in one-letter code: Translation initiation factor IF-2 (688 aa).

Over residues 50–62 (LLSGKEKSEKTKE) the composition is skewed to basic and acidic residues. A disordered region spans residues 50–95 (LLSGKEKSEKTKEEDDEIETTAKNPIKESINNKKSNKRDDKNEKVN). Over residues 72-82 (KNPIKESINNK) the composition is skewed to low complexity. A compositionally biased stretch (basic and acidic residues) spans 86–95 (KRDDKNEKVN). A tr-type G domain is found at 187-354 (KRSPIITVMG…MILLSSEILE (168 aa)). The interval 196–203 (GHVDHGKT) is G1. A GTP-binding site is contributed by 196–203 (GHVDHGKT). Positions 221–225 (GITQH) are G2. The interval 242–245 (DTPG) is G3. Residues 242-246 (DTPGH) and 296-299 (NKID) each bind GTP. Residues 296 to 299 (NKID) form a G4 region. Residues 332 to 334 (SAH) form a G5 region.

The protein belongs to the TRAFAC class translation factor GTPase superfamily. Classic translation factor GTPase family. IF-2 subfamily.

The protein localises to the cytoplasm. Functionally, one of the essential components for the initiation of protein synthesis. Protects formylmethionyl-tRNA from spontaneous hydrolysis and promotes its binding to the 30S ribosomal subunits. Also involved in the hydrolysis of GTP during the formation of the 70S ribosomal complex. This is Translation initiation factor IF-2 from Clostridium botulinum (strain Langeland / NCTC 10281 / Type F).